A 507-amino-acid polypeptide reads, in one-letter code: Zinc finger CCCH-type with G patch domain-containing protein (507 aa).

Met-1 bears the N-acetylmethionine mark. Residues 88–125 (PVDPGNDSKTVPGSEVQPTPTSSALEEEEEDPDLEDLS) are disordered. Residues 94–111 (DSKTVPGSEVQPTPTSSA) are compositionally biased toward polar residues. Residues 112 to 123 (LEEEEEDPDLED) are compositionally biased toward acidic residues. The segment at 170 to 196 (KSLKPCPFFLEGKCRFKENCRFSHGQL) adopts a C3H1-type zinc-finger fold. Positions 264-283 (LRTEATDSSDSDTGDASDSS) are disordered. Residue Ser-272 is modified to Phosphoserine. Thr-276 is modified (phosphothreonine). Residues 309–355 (TRGIGSKLLVKMGYEFGKGLGRHAEGRVEPIHAVVLPRGKSLDQCAE) enclose the G-patch domain. Phosphoserine is present on Ser-349. Disordered regions lie at residues 359-389 (KKTKQGQTGASRPPRCRRRSSRPEGRPPPRN) and 486-507 (AQEADLQRKQRKADTHRKMTEF). The segment covering 487 to 507 (QEADLQRKQRKADTHRKMTEF) has biased composition (basic and acidic residues).

Interacts with CHD4/Mi-2; the interaction is direct.

The protein resides in the nucleus. Functionally, transcription repressor that specifically binds the 5'-GGAG[GA]A[GA]A-3' consensus sequence. Represses transcription by recruiting the chromatin multiprotein complex NuRD to target promoters. Negatively regulates expression of EGFR, a gene involved in cell proliferation, survival and migration. Its ability to repress genes of the EGFR pathway suggest it may act as a tumor suppressor. The polypeptide is Zinc finger CCCH-type with G patch domain-containing protein (Zgpat) (Rattus norvegicus (Rat)).